We begin with the raw amino-acid sequence, 241 residues long: Large ribosomal subunit protein uL1 (241 aa).

It belongs to the universal ribosomal protein uL1 family. As to quaternary structure, part of the 50S ribosomal subunit.

Binds directly to 23S rRNA. The L1 stalk is quite mobile in the ribosome, and is involved in E site tRNA release. Functionally, protein L1 is also a translational repressor protein, it controls the translation of the L11 operon by binding to its mRNA. The sequence is that of Large ribosomal subunit protein uL1 from Streptomyces avermitilis (strain ATCC 31267 / DSM 46492 / JCM 5070 / NBRC 14893 / NCIMB 12804 / NRRL 8165 / MA-4680).